The chain runs to 290 residues: Ribosomal RNA small subunit methyltransferase A (290 aa).

S-adenosyl-L-methionine contacts are provided by N28, L30, G55, E76, D102, and N126.

The protein belongs to the class I-like SAM-binding methyltransferase superfamily. rRNA adenine N(6)-methyltransferase family. RsmA subfamily.

Its subcellular location is the cytoplasm. The catalysed reaction is adenosine(1518)/adenosine(1519) in 16S rRNA + 4 S-adenosyl-L-methionine = N(6)-dimethyladenosine(1518)/N(6)-dimethyladenosine(1519) in 16S rRNA + 4 S-adenosyl-L-homocysteine + 4 H(+). Functionally, specifically dimethylates two adjacent adenosines (A1518 and A1519) in the loop of a conserved hairpin near the 3'-end of 16S rRNA in the 30S particle. May play a critical role in biogenesis of 30S subunits. This is Ribosomal RNA small subunit methyltransferase A from Lachnoclostridium phytofermentans (strain ATCC 700394 / DSM 18823 / ISDg) (Clostridium phytofermentans).